The following is a 402-amino-acid chain: S-adenosylmethionine synthase (402 aa).

Position 15 (H15) interacts with ATP. D17 contacts Mg(2+). E43 is a K(+) binding site. 2 residues coordinate L-methionine: E56 and Q99. The tract at residues Q99–T109 is flexible loop. Residues D174–K176, R247–F248, D256, R262–K263, A279, and K283 each bind ATP. D256 contributes to the L-methionine binding site. K287 provides a ligand contact to L-methionine.

It belongs to the AdoMet synthase family. Homotetramer; dimer of dimers. It depends on Mg(2+) as a cofactor. The cofactor is K(+).

The protein localises to the cytoplasm. The enzyme catalyses L-methionine + ATP + H2O = S-adenosyl-L-methionine + phosphate + diphosphate. It functions in the pathway amino-acid biosynthesis; S-adenosyl-L-methionine biosynthesis; S-adenosyl-L-methionine from L-methionine: step 1/1. Functionally, catalyzes the formation of S-adenosylmethionine (AdoMet) from methionine and ATP. The overall synthetic reaction is composed of two sequential steps, AdoMet formation and the subsequent tripolyphosphate hydrolysis which occurs prior to release of AdoMet from the enzyme. The polypeptide is S-adenosylmethionine synthase (Streptomyces coelicolor (strain ATCC BAA-471 / A3(2) / M145)).